We begin with the raw amino-acid sequence, 318 residues long: MRKVAIIGSGNIGTDLMIKVLRVSDLLEVAAMVGIDPDSDGLARARRLKVQTTHEGVEGLLALDEFDEIDIVFDATSAGAHIKNAETLRKFGKYLVDLTPAAIGPFVVPAVNLTDQLNRNVDNVNMVTCGGQATIPIVAAVSQVTPVAYAEIVASISSKSAGPGTRANIDEFTETTAQAIESVGGAARGKAIIILNPADPPVIMRDTVLCLTGDVDQDAVRDSVSTMVEEVSRYVPGYHLKQEVQFDRVSAADVRTLLPAGVGTVSTQISVFLEVEGAAHYLPAYAGNLDIMTSAALRVGEGIAERLNHAEAPRRSRA.

9 to 12 (SGNI) provides a ligand contact to NAD(+). The Acyl-thioester intermediate role is filled by Cys129. NAD(+) is bound by residues 160–168 (SAGPGTRAN) and Asn288.

Belongs to the acetaldehyde dehydrogenase family.

It carries out the reaction acetaldehyde + NAD(+) + CoA = acetyl-CoA + NADH + H(+). The chain is Acetaldehyde dehydrogenase 2 from Mycolicibacterium vanbaalenii (strain DSM 7251 / JCM 13017 / BCRC 16820 / KCTC 9966 / NRRL B-24157 / PYR-1) (Mycobacterium vanbaalenii).